The chain runs to 173 residues: Adenine phosphoribosyltransferase (173 aa).

This sequence belongs to the purine/pyrimidine phosphoribosyltransferase family. As to quaternary structure, homodimer.

The protein resides in the cytoplasm. The catalysed reaction is AMP + diphosphate = 5-phospho-alpha-D-ribose 1-diphosphate + adenine. The protein operates within purine metabolism; AMP biosynthesis via salvage pathway; AMP from adenine: step 1/1. In terms of biological role, catalyzes a salvage reaction resulting in the formation of AMP, that is energically less costly than de novo synthesis. This chain is Adenine phosphoribosyltransferase, found in Thermoanaerobacter sp. (strain X514).